A 477-amino-acid polypeptide reads, in one-letter code: Bifunctional enzyme PyrF/PyrE (477 aa).

Positions 1–273 (MIFFDKLHQN…ITVRDVASCS (273 aa)) are OMP decarboxylase. Lys96 (proton donor) is an active-site residue. Residues 274 to 477 (VWLPDVFTVK…DEQFLALTAE (204 aa)) are orotate phosphoribosyltransferase. Residues Arg374, Lys375, Lys378, His380, and 400–408 (DDILISGKS) each bind 5-phospho-alpha-D-ribose 1-diphosphate.

In the N-terminal section; belongs to the OMP decarboxylase family. Type 2 subfamily. It in the C-terminal section; belongs to the purine/pyrimidine phosphoribosyltransferase family. Requires Mg(2+) as cofactor.

It catalyses the reaction orotidine 5'-phosphate + H(+) = UMP + CO2. The enzyme catalyses orotidine 5'-phosphate + diphosphate = orotate + 5-phospho-alpha-D-ribose 1-diphosphate. The protein operates within pyrimidine metabolism; UMP biosynthesis via de novo pathway; UMP from orotate: step 1/2. It functions in the pathway pyrimidine metabolism; UMP biosynthesis via de novo pathway; UMP from orotate: step 2/2. Catalyzes the transfer of a ribosyl phosphate group from 5-phosphoribose 1-diphosphate to orotate, leading to the formation of orotidine monophosphate (OMP). Functionally, catalyzes the decarboxylation of orotidine monophosphate (OMP) to uridine monophosphate (UMP). The chain is Bifunctional enzyme PyrF/PyrE (pyrFE) from Nostoc sp. (strain PCC 7120 / SAG 25.82 / UTEX 2576).